An 83-amino-acid chain; its full sequence is Cytochrome b559 subunit alpha (83 aa).

The helical transmembrane segment at 21–35 (VIHSITIPSLFIAGW) threads the bilayer. Heme is bound at residue H23.

Belongs to the PsbE/PsbF family. As to quaternary structure, heterodimer of an alpha subunit and a beta subunit. PSII is composed of 1 copy each of membrane proteins PsbA, PsbB, PsbC, PsbD, PsbE, PsbF, PsbH, PsbI, PsbJ, PsbK, PsbL, PsbM, PsbT, PsbX, PsbY, PsbZ, Psb30/Ycf12, at least 3 peripheral proteins of the oxygen-evolving complex and a large number of cofactors. It forms dimeric complexes. Requires heme b as cofactor.

It localises to the plastid. It is found in the chloroplast thylakoid membrane. Its function is as follows. This b-type cytochrome is tightly associated with the reaction center of photosystem II (PSII). PSII is a light-driven water:plastoquinone oxidoreductase that uses light energy to abstract electrons from H(2)O, generating O(2) and a proton gradient subsequently used for ATP formation. It consists of a core antenna complex that captures photons, and an electron transfer chain that converts photonic excitation into a charge separation. The protein is Cytochrome b559 subunit alpha of Amborella trichopoda.